The chain runs to 156 residues: Ribosome maturation factor RimP (156 aa).

It belongs to the RimP family.

It localises to the cytoplasm. In terms of biological role, required for maturation of 30S ribosomal subunits. This chain is Ribosome maturation factor RimP, found in Dictyoglomus turgidum (strain DSM 6724 / Z-1310).